The primary structure comprises 308 residues: tRNA dimethylallyltransferase (308 aa).

Position 10–17 (10–17 (GPTASGKT)) interacts with ATP. Position 12–17 (12–17 (TASGKT)) interacts with substrate. Interaction with substrate tRNA stretches follow at residues 35 to 38 (DSSL) and 159 to 163 (QRIFR).

Belongs to the IPP transferase family. Monomer. Mg(2+) is required as a cofactor.

The catalysed reaction is adenosine(37) in tRNA + dimethylallyl diphosphate = N(6)-dimethylallyladenosine(37) in tRNA + diphosphate. Functionally, catalyzes the transfer of a dimethylallyl group onto the adenine at position 37 in tRNAs that read codons beginning with uridine, leading to the formation of N6-(dimethylallyl)adenosine (i(6)A). The protein is tRNA dimethylallyltransferase of Francisella tularensis subsp. tularensis (strain FSC 198).